The following is a 157-amino-acid chain: UPF0251 protein CLJ_B1488 (157 aa).

It belongs to the UPF0251 family.

This chain is UPF0251 protein CLJ_B1488, found in Clostridium botulinum (strain 657 / Type Ba4).